Reading from the N-terminus, the 289-residue chain is NAD(P)H-hydrate epimerase (289 aa).

Residues 71 to 277 (AQTIDNELMS…SIVEKYNLKI (207 aa)) form the YjeF N-terminal domain. 122 to 126 (NNGGD) serves as a coordination point for (6S)-NADPHX. Residues Asn123 and Asp185 each contribute to the K(+) site. Residues 189–195 (GFSFRGE) and Asp218 contribute to the (6S)-NADPHX site. Ser221 is a K(+) binding site.

Belongs to the NnrE/AIBP family. The cofactor is K(+).

It catalyses the reaction (6R)-NADHX = (6S)-NADHX. The enzyme catalyses (6R)-NADPHX = (6S)-NADPHX. Functionally, catalyzes the epimerization of the S- and R-forms of NAD(P)HX, a damaged form of NAD(P)H that is a result of enzymatic or heat-dependent hydration. This is a prerequisite for the S-specific NAD(P)H-hydrate dehydratase to allow the repair of both epimers of NAD(P)HX. This Plasmodium knowlesi (strain H) protein is NAD(P)H-hydrate epimerase.